A 507-amino-acid polypeptide reads, in one-letter code: Histidine--tRNA ligase (507 aa).

It belongs to the class-II aminoacyl-tRNA synthetase family. Homodimer.

Its subcellular location is the cytoplasm. The enzyme catalyses tRNA(His) + L-histidine + ATP = L-histidyl-tRNA(His) + AMP + diphosphate + H(+). The polypeptide is Histidine--tRNA ligase (Rhizobium leguminosarum bv. trifolii (strain WSM2304)).